A 283-amino-acid polypeptide reads, in one-letter code: uncharacterized protein (283 aa).

The HTH rpiR-type domain occupies T3–P79. Residues V39 to K58 constitute a DNA-binding region (H-T-H motif). Residues A123–E264 enclose the SIS domain.

This is an uncharacterized protein from Bacillus subtilis (strain 168).